The chain runs to 277 residues: 3-methyl-2-oxobutanoate hydroxymethyltransferase (277 aa).

Mg(2+)-binding residues include Asp-53 and Asp-96. 3-methyl-2-oxobutanoate is bound by residues 53 to 54 (DS), Asp-96, and Lys-126. Glu-128 is a Mg(2+) binding site. Glu-195 serves as the catalytic Proton acceptor.

This sequence belongs to the PanB family. In terms of assembly, homodecamer; pentamer of dimers. It depends on Mg(2+) as a cofactor.

Its subcellular location is the cytoplasm. It catalyses the reaction 3-methyl-2-oxobutanoate + (6R)-5,10-methylene-5,6,7,8-tetrahydrofolate + H2O = 2-dehydropantoate + (6S)-5,6,7,8-tetrahydrofolate. It functions in the pathway cofactor biosynthesis; (R)-pantothenate biosynthesis; (R)-pantoate from 3-methyl-2-oxobutanoate: step 1/2. Its function is as follows. Catalyzes the reversible reaction in which hydroxymethyl group from 5,10-methylenetetrahydrofolate is transferred onto alpha-ketoisovalerate to form ketopantoate. This Chlorobaculum parvum (strain DSM 263 / NCIMB 8327) (Chlorobium vibrioforme subsp. thiosulfatophilum) protein is 3-methyl-2-oxobutanoate hydroxymethyltransferase.